A 326-amino-acid polypeptide reads, in one-letter code: 3-oxopimeloyl-[acyl-carrier-protein] synthase (326 aa).

Catalysis depends on residues Cys115 and His253. Positions 254–258 (QANIR) are ACP-binding. The active site involves Asn283.

This sequence belongs to the thiolase-like superfamily. BioZ family.

It carries out the reaction malonyl-[ACP] + an acyl-CoA + H(+) = a 3-oxoacyl-[ACP] + CO2 + CoA. It catalyses the reaction glutaryl-CoA + malonyl-[ACP] + H(+) = 3-oxo-6-carboxyhexanoyl-[ACP] + CO2 + CoA. It functions in the pathway cofactor biosynthesis; biotin biosynthesis. Its function is as follows. Involved in the formation of the biotin precursor pimeloyl-ACP. Catalyzes the condensation of glutaryl-CoA, an intermediate in lysine degradation, with malonyl-ACP to produce 3-oxopimeloyl-ACP. This is 3-oxopimeloyl-[acyl-carrier-protein] synthase from Brucella abortus (strain 2308).